We begin with the raw amino-acid sequence, 542 residues long: Beta-amylase 2, chloroplastic (542 aa).

Residues 1 to 55 (MAIRLNHSVIPVSVKLGAPTRVSARSSLPFSVGDWRGVSTFSGARPLVLAKVKLR) constitute a chloroplast transit peptide. Residues Asp136, His176, and Asp184 each contribute to the substrate site. Catalysis depends on Glu269, which acts as the Proton donor. Residues Lys377, His382, and Thr424 each contribute to the substrate site. Glu465 (proton acceptor) is an active-site residue. Substrate-binding positions include 466–467 (NA) and Arg501.

It belongs to the glycosyl hydrolase 14 family.

Its subcellular location is the plastid. The protein localises to the chloroplast. The catalysed reaction is Hydrolysis of (1-&gt;4)-alpha-D-glucosidic linkages in polysaccharides so as to remove successive maltose units from the non-reducing ends of the chains.. Redox regulation; active in reducing conditions, inactive in oxidizing conditions. Low beta-amylase activity. Interacts poorly with starch or other alpha-1,4-glucan. In Arabidopsis thaliana (Mouse-ear cress), this protein is Beta-amylase 2, chloroplastic (BAM2).